Reading from the N-terminus, the 490-residue chain is Cytochrome P450 2C50 (490 aa).

Ser-127 is modified (phosphoserine). Lys-249 and Lys-375 each carry N6-acetyllysine. Residue Cys-435 coordinates heme.

This sequence belongs to the cytochrome P450 family. It depends on heme as a cofactor. In terms of tissue distribution, expressed in heart and liver.

Its subcellular location is the endoplasmic reticulum membrane. The protein localises to the microsome membrane. The catalysed reaction is an organic molecule + reduced [NADPH--hemoprotein reductase] + O2 = an alcohol + oxidized [NADPH--hemoprotein reductase] + H2O + H(+). In terms of biological role, metabolizes arachidonic acid to several midchain and omega-terminal hydroxyeicosatetraenoic acids (HETE). This is Cytochrome P450 2C50 from Mus musculus (Mouse).